A 607-amino-acid polypeptide reads, in one-letter code: tRNA uridine 5-carboxymethylaminomethyl modification enzyme MnmG (607 aa).

FAD is bound by residues 11–16 (GGGHAG), Val123, and Ser178. 270 to 284 (GPRYCPSVEDKIVRF) provides a ligand contact to NAD(+). Gln367 provides a ligand contact to FAD.

The protein belongs to the MnmG family. Homodimer. Heterotetramer of two MnmE and two MnmG subunits. Requires FAD as cofactor.

Its subcellular location is the cytoplasm. Its function is as follows. NAD-binding protein involved in the addition of a carboxymethylaminomethyl (cmnm) group at the wobble position (U34) of certain tRNAs, forming tRNA-cmnm(5)s(2)U34. This is tRNA uridine 5-carboxymethylaminomethyl modification enzyme MnmG from Metamycoplasma arthritidis (strain 158L3-1) (Mycoplasma arthritidis).